We begin with the raw amino-acid sequence, 396 residues long: Acetate kinase (396 aa).

Asparagine 7 provides a ligand contact to Mg(2+). Lysine 14 is a binding site for ATP. Arginine 88 is a substrate binding site. The Proton donor/acceptor role is filled by aspartate 145. ATP contacts are provided by residues 203 to 207 (HAGNG), 278 to 280 (DAR), and 326 to 330 (GIGEN). Glutamate 379 is a binding site for Mg(2+).

Belongs to the acetokinase family. Homodimer. It depends on Mg(2+) as a cofactor. The cofactor is Mn(2+).

It is found in the cytoplasm. It carries out the reaction acetate + ATP = acetyl phosphate + ADP. Its pathway is metabolic intermediate biosynthesis; acetyl-CoA biosynthesis; acetyl-CoA from acetate: step 1/2. Catalyzes the formation of acetyl phosphate from acetate and ATP. Can also catalyze the reverse reaction. This is Acetate kinase from Phytoplasma australiense.